A 170-amino-acid polypeptide reads, in one-letter code: Adenine phosphoribosyltransferase (170 aa).

Belongs to the purine/pyrimidine phosphoribosyltransferase family. Homodimer.

The protein resides in the cytoplasm. It carries out the reaction AMP + diphosphate = 5-phospho-alpha-D-ribose 1-diphosphate + adenine. The protein operates within purine metabolism; AMP biosynthesis via salvage pathway; AMP from adenine: step 1/1. Its function is as follows. Catalyzes a salvage reaction resulting in the formation of AMP, that is energically less costly than de novo synthesis. The polypeptide is Adenine phosphoribosyltransferase (Acaryochloris marina (strain MBIC 11017)).